A 204-amino-acid polypeptide reads, in one-letter code: MTSVWKTKVLTGLNKLFDKDGKKAAAAEFLKSFNKEEIGKEIDDKKTELEPKVVEVVESSPPEIKALLKDKKTASKIKKNGPAVTKFLEELAKIDFPGAKPVSDAVAKSGTTPLSPAIAFILEKVAPFVPKEEPKPEPEAEAAAETTSREVAVEEEKKEEEAAPAEPAAAAAEAAAPSTEVVEEKKEEEKPAEAAAPAAEPEKQ.

The interval 128-204 is disordered; that stretch reads FVPKEEPKPE…AAPAAEPEKQ (77 aa). Over residues 147–161 the composition is skewed to basic and acidic residues; that stretch reads TSREVAVEEEKKEEE. Over residues 164–180 the composition is skewed to low complexity; it reads PAEPAAAAAEAAAPSTE. A compositionally biased stretch (basic and acidic residues) spans 182-192; it reads VEEKKEEEKPA. Positions 193 to 204 are enriched in low complexity; sequence EAAAPAAEPEKQ.

The protein belongs to the DREPP family.

This chain is Salt stress root protein RS1, found in Oryza sativa subsp. indica (Rice).